A 228-amino-acid polypeptide reads, in one-letter code: Small ribosomal subunit protein uS3 (228 aa).

Residues 39-107 (VREYLQDKLK…PVHINIEEIR (69 aa)) form the KH type-2 domain.

It belongs to the universal ribosomal protein uS3 family. In terms of assembly, part of the 30S ribosomal subunit. Forms a tight complex with proteins S10 and S14.

Its function is as follows. Binds the lower part of the 30S subunit head. Binds mRNA in the 70S ribosome, positioning it for translation. This chain is Small ribosomal subunit protein uS3, found in Pseudomonas fluorescens (strain ATCC BAA-477 / NRRL B-23932 / Pf-5).